The sequence spans 258 residues: Indole-3-glycerol phosphate synthase (258 aa).

It belongs to the TrpC family.

The catalysed reaction is 1-(2-carboxyphenylamino)-1-deoxy-D-ribulose 5-phosphate + H(+) = (1S,2R)-1-C-(indol-3-yl)glycerol 3-phosphate + CO2 + H2O. Its pathway is amino-acid biosynthesis; L-tryptophan biosynthesis; L-tryptophan from chorismate: step 4/5. The sequence is that of Indole-3-glycerol phosphate synthase from Legionella pneumophila (strain Lens).